The sequence spans 57 residues: uncharacterized protein (57 aa).

Residues 3 to 23 (PLTLLIIIGGVILGNELIISL) traverse the membrane as a helical segment. The tract at residues 38–57 (KHKHKTQENYETFASDKKRT) is disordered.

The protein resides in the host membrane. This is an uncharacterized protein from Acidianus bottle-shaped virus (isolate Italy/Pozzuoli) (ABV).